We begin with the raw amino-acid sequence, 366 residues long: 2-oxoglutarate synthase subunit KorA (366 aa).

As to quaternary structure, heterotetramer of the KorA, KorB, KorC and KorD subunits.

It carries out the reaction 2 oxidized [2Fe-2S]-[ferredoxin] + 2-oxoglutarate + CoA = succinyl-CoA + 2 reduced [2Fe-2S]-[ferredoxin] + CO2 + H(+). The polypeptide is 2-oxoglutarate synthase subunit KorA (korA) (Methanocaldococcus jannaschii (strain ATCC 43067 / DSM 2661 / JAL-1 / JCM 10045 / NBRC 100440) (Methanococcus jannaschii)).